The sequence spans 477 residues: ATP synthase subunit beta (477 aa).

Position 163 to 170 (163 to 170) interacts with ATP; sequence GGAGVGKT.

The protein belongs to the ATPase alpha/beta chains family. As to quaternary structure, F-type ATPases have 2 components, CF(1) - the catalytic core - and CF(0) - the membrane proton channel. CF(1) has five subunits: alpha(3), beta(3), gamma(1), delta(1), epsilon(1). CF(0) has four main subunits: a(1), b(1), b'(1) and c(9-12).

It is found in the cellular thylakoid membrane. It catalyses the reaction ATP + H2O + 4 H(+)(in) = ADP + phosphate + 5 H(+)(out). Functionally, produces ATP from ADP in the presence of a proton gradient across the membrane. The catalytic sites are hosted primarily by the beta subunits. The polypeptide is ATP synthase subunit beta (Synechococcus sp. (strain JA-3-3Ab) (Cyanobacteria bacterium Yellowstone A-Prime)).